The primary structure comprises 483 residues: UDP-N-acetylmuramoyl-L-alanyl-D-glutamate--L-lysine ligase (483 aa).

Serine 44 is a binding site for UDP-N-acetyl-alpha-D-muramoyl-L-alanyl-D-glutamate. 120–126 (GTKGKTT) contributes to the ATP binding site. Residues 162–163 (TT), serine 189, and arginine 197 contribute to the UDP-N-acetyl-alpha-D-muramoyl-L-alanyl-D-glutamate site. Lysine 231 is subject to N6-carboxylysine. The L-lysine recognition motif signature appears at 406 to 409 (DDPN).

It belongs to the MurCDEF family. MurE subfamily. In terms of processing, carboxylation is probably crucial for Mg(2+) binding and, consequently, for the gamma-phosphate positioning of ATP.

The protein resides in the cytoplasm. The catalysed reaction is UDP-N-acetyl-alpha-D-muramoyl-L-alanyl-D-glutamate + L-lysine + ATP = UDP-N-acetyl-alpha-D-muramoyl-L-alanyl-gamma-D-glutamyl-L-lysine + ADP + phosphate + H(+). It participates in cell wall biogenesis; peptidoglycan biosynthesis. Functionally, catalyzes the addition of L-lysine to the nucleotide precursor UDP-N-acetylmuramoyl-L-alanyl-D-glutamate (UMAG) in the biosynthesis of bacterial cell-wall peptidoglycan. The protein is UDP-N-acetylmuramoyl-L-alanyl-D-glutamate--L-lysine ligase of Streptococcus mutans serotype c (strain ATCC 700610 / UA159).